Here is a 428-residue protein sequence, read N- to C-terminus: 3-phosphoshikimate 1-carboxyvinyltransferase (428 aa).

K22, S23, and R27 together coordinate 3-phosphoshikimate. K22 provides a ligand contact to phosphoenolpyruvate. Residues G94 and R122 each contribute to the phosphoenolpyruvate site. 3-phosphoshikimate is bound by residues S167, Q169, D314, and K341. Q169 is a binding site for phosphoenolpyruvate. D314 (proton acceptor) is an active-site residue. R345 and R387 together coordinate phosphoenolpyruvate.

This sequence belongs to the EPSP synthase family. Monomer.

Its subcellular location is the cytoplasm. The catalysed reaction is 3-phosphoshikimate + phosphoenolpyruvate = 5-O-(1-carboxyvinyl)-3-phosphoshikimate + phosphate. It participates in metabolic intermediate biosynthesis; chorismate biosynthesis; chorismate from D-erythrose 4-phosphate and phosphoenolpyruvate: step 6/7. Its function is as follows. Catalyzes the transfer of the enolpyruvyl moiety of phosphoenolpyruvate (PEP) to the 5-hydroxyl of shikimate-3-phosphate (S3P) to produce enolpyruvyl shikimate-3-phosphate and inorganic phosphate. This is 3-phosphoshikimate 1-carboxyvinyltransferase from Geotalea uraniireducens (strain Rf4) (Geobacter uraniireducens).